A 503-amino-acid chain; its full sequence is ATP synthase subunit alpha (503 aa).

ATP is bound at residue 169 to 176 (GDRGTGKT).

Belongs to the ATPase alpha/beta chains family. As to quaternary structure, F-type ATPases have 2 components, CF(1) - the catalytic core - and CF(0) - the membrane proton channel. CF(1) has five subunits: alpha(3), beta(3), gamma(1), delta(1), epsilon(1). CF(0) has three main subunits: a(1), b(2) and c(9-12). The alpha and beta chains form an alternating ring which encloses part of the gamma chain. CF(1) is attached to CF(0) by a central stalk formed by the gamma and epsilon chains, while a peripheral stalk is formed by the delta and b chains.

The protein localises to the cell inner membrane. It catalyses the reaction ATP + H2O + 4 H(+)(in) = ADP + phosphate + 5 H(+)(out). Its function is as follows. Produces ATP from ADP in the presence of a proton gradient across the membrane. The alpha chain is a regulatory subunit. In Leptospira interrogans serogroup Icterohaemorrhagiae serovar copenhageni (strain Fiocruz L1-130), this protein is ATP synthase subunit alpha.